The following is a 394-amino-acid chain: NAD(P)H-quinone oxidoreductase subunit H (394 aa).

The protein belongs to the complex I 49 kDa subunit family. In terms of assembly, NDH-1 can be composed of about 15 different subunits; different subcomplexes with different compositions have been identified which probably have different functions.

It is found in the cellular thylakoid membrane. It carries out the reaction a plastoquinone + NADH + (n+1) H(+)(in) = a plastoquinol + NAD(+) + n H(+)(out). The enzyme catalyses a plastoquinone + NADPH + (n+1) H(+)(in) = a plastoquinol + NADP(+) + n H(+)(out). Functionally, NDH-1 shuttles electrons from an unknown electron donor, via FMN and iron-sulfur (Fe-S) centers, to quinones in the respiratory and/or the photosynthetic chain. The immediate electron acceptor for the enzyme in this species is believed to be plastoquinone. Couples the redox reaction to proton translocation, and thus conserves the redox energy in a proton gradient. Cyanobacterial NDH-1 also plays a role in inorganic carbon-concentration. The sequence is that of NAD(P)H-quinone oxidoreductase subunit H from Prochlorococcus marinus (strain NATL1A).